We begin with the raw amino-acid sequence, 492 residues long: MSARTPLHAPPSHEGIAHFPREIRRFFTGEPGQTLLVNGAPGTGKTLFTIRGLDVLSREGDVLYVSTRVDQETVYEMYVEGHAALDRTALLDLSQDPFGLPMDVDVPFETLNLESLLSWVDAISAPATKLTLAFDSWRLVYEYLAARHDSPPSIETVTNQLVALARDAGVRLVLVSETATQSPLEYIVDGVVTLHVTDNERGRTRRQLRLEKLRGVRIENRLQPFTLADGQFKAITPVELSTTQSVPDEATWEPLANPTARFSTGIRDLDTILSGGFNRGGVVHLDLGADLSRDAWSVLVLPAIRNFLANEMGVAVVPPKEGSPGLLHNDLSAVLSKAVFDTHCHVFETYAGPTRDHDDAVDPDRLPGHDTTPTEHGTLSYDPYIARAERIREHSDGPLLHVISMDTAYHAFETRLGDFANYVALHNDASVLITKPGTALRTRADRVADMHFRLECAGDAIVLYGETPLTPLLGIGVDQSGTIPEITLTEMV.

Gly39–Thr46 serves as a coordination point for ATP. Positions Arg355–Gly368 are enriched in basic and acidic residues. The tract at residues Arg355 to Leu379 is disordered.

Belongs to the gas vesicle GvpD family. Homodimer. Interacts with GvpE, also with GvpE from H.mediterranei.

It localises to the cytoplasm. Its function is as follows. Causes a decrease in the amount of GvpE protein. Gas vesicles are hollow, gas filled proteinaceous nanostructures found in several microbial planktonic microorganisms. They allow positioning of halobacteria at the optimal depth for growth in the poorly aerated, shallow brine pools of their habitat. In terms of biological role, expression of 2 c-vac DNA fragments containing 2 divergently transcribed regions (gvpE-gvpF-gvpG-gvpH-gvpI-gvpJ-gvpK-gvpL-gvpM and gvpA-gvpC-gvpN-gvpO) allows H.volcanii to produce gas vesicles. This chain is Protein GvpD2, found in Halobacterium salinarum (strain ATCC 700922 / JCM 11081 / NRC-1) (Halobacterium halobium).